The following is a 769-amino-acid chain: Endonuclease MutS2 (769 aa).

335 to 342 provides a ligand contact to ATP; the sequence is GGNAGGKT. One can recognise a Smr domain in the interval 694-769; the sequence is IDLRGKRADV…GDGMTEVELV (76 aa).

The protein belongs to the DNA mismatch repair MutS family. MutS2 subfamily. Homodimer. Binds to stalled ribosomes, contacting rRNA.

Functionally, endonuclease that is involved in the suppression of homologous recombination and thus may have a key role in the control of bacterial genetic diversity. In terms of biological role, acts as a ribosome collision sensor, splitting the ribosome into its 2 subunits. Detects stalled/collided 70S ribosomes which it binds and splits by an ATP-hydrolysis driven conformational change. Acts upstream of the ribosome quality control system (RQC), a ribosome-associated complex that mediates the extraction of incompletely synthesized nascent chains from stalled ribosomes and their subsequent degradation. Probably generates substrates for RQC. This is Endonuclease MutS2 from Maridesulfovibrio salexigens (strain ATCC 14822 / DSM 2638 / NCIMB 8403 / VKM B-1763) (Desulfovibrio salexigens).